A 195-amino-acid chain; its full sequence is 3-isopropylmalate dehydratase small subunit (195 aa).

The protein belongs to the LeuD family. LeuD type 1 subfamily. In terms of assembly, heterodimer of LeuC and LeuD.

The enzyme catalyses (2R,3S)-3-isopropylmalate = (2S)-2-isopropylmalate. It participates in amino-acid biosynthesis; L-leucine biosynthesis; L-leucine from 3-methyl-2-oxobutanoate: step 2/4. Catalyzes the isomerization between 2-isopropylmalate and 3-isopropylmalate, via the formation of 2-isopropylmaleate. This Salinispora tropica (strain ATCC BAA-916 / DSM 44818 / JCM 13857 / NBRC 105044 / CNB-440) protein is 3-isopropylmalate dehydratase small subunit.